The following is a 131-amino-acid chain: MEVGVGIHIIADFYGVDSELIATTERMYPIIEGAVEYGRLTKISSDYYQFRPKGASGIVLLAESHLSFHTWPEYGLVTLDIYTCGDPKTADDAFAYLVDKLRPTSISTRKIVRGDMIEEAGENQIEEAALH.

The Schiff-base intermediate with substrate; via pyruvic acid role is filled by Ser64. A Pyruvic acid (Ser); by autocatalysis modification is found at Ser64. The active-site Proton acceptor; for processing activity is His69. The active-site Proton donor; for catalytic activity is Cys84.

Belongs to the prokaryotic AdoMetDC family. Type 1 subfamily. As to quaternary structure, heterotetramer of two alpha and two beta chains arranged as a dimer of alpha/beta heterodimers. Pyruvate is required as a cofactor. Is synthesized initially as an inactive proenzyme. Formation of the active enzyme involves a self-maturation process in which the active site pyruvoyl group is generated from an internal serine residue via an autocatalytic post-translational modification. Two non-identical subunits are generated from the proenzyme in this reaction, and the pyruvate is formed at the N-terminus of the alpha chain, which is derived from the carboxyl end of the proenzyme. The post-translation cleavage follows an unusual pathway, termed non-hydrolytic serinolysis, in which the side chain hydroxyl group of the serine supplies its oxygen atom to form the C-terminus of the beta chain, while the remainder of the serine residue undergoes an oxidative deamination to produce ammonia and the pyruvoyl group blocking the N-terminus of the alpha chain.

It carries out the reaction S-adenosyl-L-methionine + H(+) = S-adenosyl 3-(methylsulfanyl)propylamine + CO2. Its pathway is amine and polyamine biosynthesis; S-adenosylmethioninamine biosynthesis; S-adenosylmethioninamine from S-adenosyl-L-methionine: step 1/1. Catalyzes the decarboxylation of S-adenosylmethionine to S-adenosylmethioninamine (dcAdoMet), the propylamine donor required for the synthesis of the polyamines spermine and spermidine from the diamine putrescine. The sequence is that of S-adenosylmethionine decarboxylase proenzyme from Thermoplasma acidophilum (strain ATCC 25905 / DSM 1728 / JCM 9062 / NBRC 15155 / AMRC-C165).